The primary structure comprises 220 residues: 7-carboxy-7-deazaguanine synthase (220 aa).

Substrate contacts are provided by residues I16–G18 and R31. The region spanning F22–P215 is the Radical SAM core domain. Residues C35, C39, and C42 each contribute to the [4Fe-4S] cluster site. T44 contacts Mg(2+). T74 serves as a coordination point for substrate. Position 76 (G76) interacts with S-adenosyl-L-methionine.

The protein belongs to the radical SAM superfamily. 7-carboxy-7-deazaguanine synthase family. As to quaternary structure, homodimer. [4Fe-4S] cluster serves as cofactor. The cofactor is S-adenosyl-L-methionine. Mg(2+) is required as a cofactor.

The catalysed reaction is 6-carboxy-5,6,7,8-tetrahydropterin + H(+) = 7-carboxy-7-deazaguanine + NH4(+). The protein operates within purine metabolism; 7-cyano-7-deazaguanine biosynthesis. Its function is as follows. Catalyzes the complex heterocyclic radical-mediated conversion of 6-carboxy-5,6,7,8-tetrahydropterin (CPH4) to 7-carboxy-7-deazaguanine (CDG), a step common to the biosynthetic pathways of all 7-deazapurine-containing compounds. The protein is 7-carboxy-7-deazaguanine synthase of Chlorobaculum tepidum (strain ATCC 49652 / DSM 12025 / NBRC 103806 / TLS) (Chlorobium tepidum).